Consider the following 259-residue polypeptide: (3R)-3-hydroxyacyl-CoA dehydrogenase (259 aa).

NAD(+)-binding positions include 13–21 and 40–41; these read LVTGAGSGI and DL. Serine 58 bears the Phosphoserine mark. Residue lysine 66 is modified to N6-acetyllysine. An NAD(+)-binding site is contributed by 72 to 74; that stretch reads ADV. Substrate is bound at residue serine 154. Residue lysine 158 is modified to N6-succinyllysine. The Proton acceptor role is filled by tyrosine 167. NAD(+) contacts are provided by residues 167–171 and 200–202; these read YASSK and IAT. Residue lysine 171 is modified to N6-succinyllysine.

This sequence belongs to the short-chain dehydrogenases/reductases (SDR) family. Heterotetramer with CBR4; contains two molecules of HSD17B8 and CBR4. As to expression, kidney, liver, testis, ovary and spleen. Oviduct, uterus, mammary gland, vagina, prostate, clitoral gland and moderately heart, dorsal skin, brain and lung.

Its subcellular location is the mitochondrion matrix. The enzyme catalyses a (3R)-3-hydroxyacyl-CoA + NAD(+) = a 3-oxoacyl-CoA + NADH + H(+). It carries out the reaction 17beta-estradiol + NAD(+) = estrone + NADH + H(+). The catalysed reaction is testosterone + NAD(+) = androst-4-ene-3,17-dione + NADH + H(+). It catalyses the reaction 17beta-hydroxy-5alpha-androstan-3-one + NAD(+) = 5alpha-androstan-3,17-dione + NADH + H(+). It participates in lipid metabolism; fatty acid biosynthesis. It functions in the pathway steroid biosynthesis; estrogen biosynthesis. The protein operates within lipid metabolism; mitochondrial fatty acid beta-oxidation. In terms of biological role, required for the solubility and assembly of the heterotetramer 3-ketoacyl-[acyl carrier protein] (ACP) reductase functional complex (KAR or KAR1) that forms part of the mitochondrial fatty acid synthase (mtFAS). Alpha-subunit of the KAR complex, acts as scaffold protein, required for the stability of carbonyl reductase type-4 (CBR4, beta-subunit of the KAR complex) and for its 3-ketoacyl-ACP reductase activity, thereby participating in mitochondrial fatty acid biosynthesis. Catalyzes the NAD-dependent conversion of (3R)-3-hydroxyacyl-CoA into 3-ketoacyl-CoA (3-oxoacyl-CoA) with no chain length preference, this enzymatic activity is not needed for the KAR function. Prefers (3R)-3-hydroxyacyl-CoA over (3S)-3-hydroxyacyl-CoA and displays enzymatic activity only in the presence of NAD(+)(H). Cooperates with enoyl-CoA hydratase 1 in mitochondria, together they constitute an alternative route to the auxiliary enzyme pathways for the breakdown of Z-PUFA (cis polyunsaturated fatty acid) enoyl-esters. NAD-dependent 17-beta-hydroxysteroid dehydrogenase with highest activity towards estradiol. It efficiently catalyzes the oxidation of estradiol (E2), testosterone, and dihydrotestosterone. Primarily an oxidative enzyme, it can switch to a reductive mode determined in the appropriate physiologic milieu and catalyze the reduction of estrone (E1) to form biologically active estradiol (E2). The sequence is that of (3R)-3-hydroxyacyl-CoA dehydrogenase (Hsd17b8) from Mus musculus (Mouse).